The following is a 1145-amino-acid chain: DNA-directed RNA polymerase subunit beta (1145 aa).

Basic and acidic residues predominate over residues 1101 to 1112 (LPEERRVSSSKE). A disordered region spans residues 1101-1145 (LPEERRVSSSKEEIEEEEEVEDNSDEFDETFLEEAEDDFSLDDED). Residues 1113–1145 (EIEEEEEVEDNSDEFDETFLEEAEDDFSLDDED) show a composition bias toward acidic residues.

Belongs to the RNA polymerase beta chain family. The RNAP catalytic core consists of 2 alpha, 1 beta, 1 beta' and 1 omega subunit. When a sigma factor is associated with the core the holoenzyme is formed, which can initiate transcription.

It carries out the reaction RNA(n) + a ribonucleoside 5'-triphosphate = RNA(n+1) + diphosphate. Functionally, DNA-dependent RNA polymerase catalyzes the transcription of DNA into RNA using the four ribonucleoside triphosphates as substrates. This chain is DNA-directed RNA polymerase subunit beta, found in Desulforamulus reducens (strain ATCC BAA-1160 / DSM 100696 / MI-1) (Desulfotomaculum reducens).